A 155-amino-acid polypeptide reads, in one-letter code: MDYEIKQEKKRTIAGFHLVGPWEKTVKQGFDQLMMWVENHNIEPLEWVAVYYDNPDEVPAEKLRCDTVVTVPENFCLPENSEGVNVTEIAGGQYAVTVARVQGHDFGTPWYQFINSLLEDSQYQMAHKPCFEVYLNNGAVDGYWDIEMYVPVLPK.

Belongs to the DNA gyrase inhibitor family. In terms of assembly, interacts with DNA gyrase.

Its subcellular location is the cytoplasm. Its function is as follows. Inhibits the supercoiling activity of DNA gyrase. Acts by inhibiting DNA gyrase at an early step, prior to (or at the step of) binding of DNA by the gyrase. It protects cells against toxins that target DNA gyrase, by inhibiting activity of these toxins and reducing the formation of lethal double-strand breaks in the cell. In Escherichia fergusonii (strain ATCC 35469 / DSM 13698 / CCUG 18766 / IAM 14443 / JCM 21226 / LMG 7866 / NBRC 102419 / NCTC 12128 / CDC 0568-73), this protein is DNA gyrase inhibitor.